A 195-amino-acid chain; its full sequence is Imidazoleglycerol-phosphate dehydratase (195 aa).

This sequence belongs to the imidazoleglycerol-phosphate dehydratase family.

The protein resides in the cytoplasm. It catalyses the reaction D-erythro-1-(imidazol-4-yl)glycerol 3-phosphate = 3-(imidazol-4-yl)-2-oxopropyl phosphate + H2O. It participates in amino-acid biosynthesis; L-histidine biosynthesis; L-histidine from 5-phospho-alpha-D-ribose 1-diphosphate: step 6/9. The chain is Imidazoleglycerol-phosphate dehydratase from Geobacillus kaustophilus (strain HTA426).